Reading from the N-terminus, the 385-residue chain is MVHPPPPPPRLLLVALVGLLSLREVVAEPAEEAGTPCPEGLWPVPPQVLPRVTYTQVSQGQAEGIAFFYHPCAHPWLKLQLALLAHLYVAKPTLIPDFSLTWDRPLVLTAWGTALELAWIEPAWVAHWLKRQRRRKQRKSVWFLSDNLFGPTPTMPASRRGKLCGRRCVQAPTLAFALRSWRPPGAQVTSRGSGRSSISVVKRRGLRAALGLQSTPPGLRVSLASSQSLKAQQLTLGTSSVAPVSLTTGGPGGNGRSRTEAQMPSGQGNHGGCACPGQVSPAPRAAGPPRVARGPTPRTEEAAWAAMALTFLLVLLTLATLCTRLHRNFRRSESIYWGPTADSQDTVAALLKRRLPLPSRRIKRSRRRPLLPPTPDSGPDSESSD.

The first 27 residues, 1 to 27 (MVHPPPPPPRLLLVALVGLLSLREVVA), serve as a signal peptide directing secretion. The Extracellular portion of the chain corresponds to 28 to 301 (EPAEEAGTPC…ARGPTPRTEE (274 aa)). The tract at residues 242–297 (APVSLTTGGPGGNGRSRTEAQMPSGQGNHGGCACPGQVSPAPRAAGPPRVARGPTP) is disordered. Positions 281–297 (PAPRAAGPPRVARGPTP) are enriched in low complexity. The helical transmembrane segment at 302-322 (AAWAAMALTFLLVLLTLATLC) threads the bilayer. The Cytoplasmic portion of the chain corresponds to 323–385 (TRLHRNFRRS…DSGPDSESSD (63 aa)). Over residues 359–369 (SRRIKRSRRRP) the composition is skewed to basic residues. The tract at residues 359–385 (SRRIKRSRRRPLLPPTPDSGPDSESSD) is disordered.

Its subcellular location is the cell membrane. It is found in the cytoplasm. Its function is as follows. May act as a tumor suppressor. Inhibits tumor cell growth, when overexpressed. This Mus musculus (Mouse) protein is Tumor protein p53-inducible protein 13 (Tp53i13).